A 109-amino-acid polypeptide reads, in one-letter code: Putative double-stranded DNA mimic protein YciU (109 aa).

This sequence belongs to the putative dsDNA mimic protein family.

Its function is as follows. May act as a double-stranded DNA (dsDNA) mimic. Probably regulates the activity of a dsDNA-binding protein. This chain is Putative double-stranded DNA mimic protein YciU, found in Salmonella paratyphi B (strain ATCC BAA-1250 / SPB7).